We begin with the raw amino-acid sequence, 715 residues long: Transcription factor MST12 (715 aa).

Low complexity predominate over residues 214-224; sequence SSSFNAQQVSF. Disordered stretches follow at residues 214-243, 439-469, and 518-539; these read SSSF…MPPP, AAHR…NSPP, and PMPS…AQGG. 2 consecutive C2H2-type zinc fingers follow at residues 564-588 and 594-616; these read HSCP…VRTH and YICP…KRTH. The interval 632–691 is disordered; that stretch reads EEEYSGDDHLGSLEEASPTSEGGYVTSSLNSAMAHSNTSQHPGSNAVSPNPGPMSHAPTY. Residues 648 to 679 are compositionally biased toward polar residues; sequence SPTSEGGYVTSSLNSAMAHSNTSQHPGSNAVS.

The protein belongs to the STE12 transcription factor family.

It localises to the nucleus. Functionally, transcription factor that may function downstream of PMK1 to regulate genes involved in infectious hyphae growth. Is not essential for vegetative growth, conidiation or appressorium formation. May be involved in the regulation of the expression of the cell surface sensor MSB2. In Pyricularia oryzae (strain 70-15 / ATCC MYA-4617 / FGSC 8958) (Rice blast fungus), this protein is Transcription factor MST12.